The following is a 603-amino-acid chain: MRRSEVLADESITCLQKALTHLREIWELIGIPEEQRLQRTEVVKKHIKDLLDRMIAEEESLRERLLKSISICQKELSTLCSELQVKPFQEEKDTTILQLEKDLRTQVELMRKQKKERKQELKLLQEQEQELRDILCMPPCDVDSTSVPTLEELKLFRQRVATLRETKESRREEFVNIKKQIILCMEELEHSPDTSFERDVVCEDESAFCLSLENIATLQKLLKQLEMKKSQNEAECEGLRTQIRELWDRLQIPEEEREPVEAIMTGSKTKIRNALKLEVDRLEELKMQNIKQVIEKIRVELAQFWDQCFYSQEQRQAFAPYYSEDYTENLLHLHDAEIVRLRNYYDVHKELFQGVQKWEESWKLFLEFERKASDPGRFTNRGGNLLKEEKERAKLQKTLPKLEEELKARIEQWEQEHSTAFVVNGQKFMEYVTEQWELHRLEKERAKQERQLKNKKQTEAEMLYGSTPRTPSKRPGQTPKKSGKMNTTTMSSATPNSSIRPVFGGSVYRSPMSRLPPSGSKSVVTSLCSGKKTPRAAQLRANKENLDLNGSILSGGYPGSTPLQHNCSIKSVASTYSEFSRELSKASRSDATSRILNSTNIQS.

Positions Met-1–Leu-341 are dimerization. 5 coiled-coil regions span residues Glu-34–Leu-65, Ile-96–Cys-136, Ser-211–Leu-246, Arg-272–Phe-304, and Gly-383–Leu-463. Positions Arg-342 to Ser-466 are spectrin-fold. Positions Lys-447–Glu-459 are enriched in basic and acidic residues. Residues Lys-447–Val-502 form a disordered region. A unstructured, Arg/Lys rich region spans residues Thr-467–Ser-603. At Thr-470 the chain carries Phosphothreonine; by CDK1. Positions Lys-484–Ile-499 are enriched in polar residues. Residues Ser-510 and Ser-568 each carry the phosphoserine modification. Position 575 is a phosphothreonine (Thr-575). Residues Leu-583 to Ser-603 are disordered. The span at Ser-589 to Ser-603 shows a compositional bias: polar residues. A Phosphothreonine; by PLK1 modification is found at Thr-599.

It belongs to the MAP65/ASE1 family. In terms of assembly, homodimer. Interacts with the C-terminal Rho-GAP domain and the basic region of RACGAP1. The interaction with RACGAP1 inhibits its GAP activity towards CDC42 in vitro, which may be required for maintaining normal spindle morphology. Interacts (via N-terminus) with the C-terminus of CENPE (via C-terminus); the interaction occurs during late mitosis. Interacts (via N-terminus) with KIF4A (via C-terminus); the interaction is required for the progression of mitosis. Interacts (via N-terminus) with KIF23 (via C-terminus); the interaction occurs during late mitosis. Interacts with KIF14 and KIF20A. Interacts with PLK1. Interacts with KIF20B. Interacts with CCDC66. Post-translationally, phosphorylation by CDK1 in early mitosis holds PRC1 in an inactive monomeric state, during the metaphase to anaphase transition, PRC1 is dephosphorylated, promoting interaction with KIF4A, which then translocates PRC1 along mitotic spindles to the plus ends of antiparallel interdigitating microtubules. Dephosphorylation also promotes MT-bundling activity by allowing dimerization. Phosphorylation by CDK1 prevents PLK1-binding: upon degradation of CDK1 at anaphase and dephosphorylation, it is then phosphorylated by PLK1, leading to cytokinesis.

The protein localises to the nucleus. The protein resides in the cytoplasm. Its subcellular location is the cytoskeleton. It is found in the spindle pole. It localises to the midbody. In terms of biological role, key regulator of cytokinesis that cross-links antiparrallel microtubules at an average distance of 35 nM. Essential for controlling the spatiotemporal formation of the midzone and successful cytokinesis. Required for KIF14 localization to the central spindle and midbody. Required to recruit PLK1 to the spindle. Stimulates PLK1 phosphorylation of RACGAP1 to allow recruitment of ECT2 to the central spindle. Acts as an oncogene for promoting bladder cancer cells proliferation, apoptosis inhibition and carcinogenic progression. The protein is Protein regulator of cytokinesis 1 of Mus musculus (Mouse).